Reading from the N-terminus, the 190-residue chain is Adenylate kinase (190 aa).

11-16 lines the ATP pocket; that stretch reads GSGKGT. Residues 31 to 60 form an NMP region; sequence STGDVLRGEMKAETELGKIAKDYIEKGQLV. AMP is bound by residues T32, R37, 58–60, 86–89, and Q93; these read QLV and GFPR. Residues 127-137 form an LID region; sequence ERGKVSGRSDD. Residue R128 coordinates ATP. Positions 134 and 145 each coordinate AMP. ATP is bound at residue G173.

The protein belongs to the adenylate kinase family. In terms of assembly, monomer.

The protein localises to the cytoplasm. The enzyme catalyses AMP + ATP = 2 ADP. The protein operates within purine metabolism; AMP biosynthesis via salvage pathway; AMP from ADP: step 1/1. In terms of biological role, catalyzes the reversible transfer of the terminal phosphate group between ATP and AMP. Plays an important role in cellular energy homeostasis and in adenine nucleotide metabolism. The polypeptide is Adenylate kinase (Parabacteroides distasonis (strain ATCC 8503 / DSM 20701 / CIP 104284 / JCM 5825 / NCTC 11152)).